A 30-amino-acid chain; its full sequence is Conotoxin CcTx (30 aa).

Pro2 carries the post-translational modification 4-hydroxyproline. Ser7 carries an O-linked (HexNAc...) serine glycan. 3 cysteine pairs are disulfide-bonded: Cys12/Cys21, Cys13/Cys26, and Cys24/Cys30. 4-hydroxyproline is present on residues Pro17 and Pro22.

Post-translationally, O-glycosylated at Ser-7 by a core type 9 glycan, containing both D- and L-galactose units (alpha-L-Galp-(1-&gt;4)-alpha-D- GlcpNAc-(1-&gt;6)-[alpha-L-Galp-(1-&gt;2)-bets-D-Galp-(1-&gt;3)-]alpha-D-GalpNAc-(1-&gt;O)). In terms of tissue distribution, expressed by the venom duct.

The protein resides in the secreted. In terms of biological role, may specifically activate neuronal voltage-gated sodium channels (Nav) at the resting membrane potential. Causes a marked contraction and extension of the caudal and dorsal fins in fish and noticeable spontaneous contractions of isolated frog neuromuscular preparations. The polypeptide is Conotoxin CcTx (Conus consors (Singed cone)).